Reading from the N-terminus, the 298-residue chain is MTTTTAEGGGGVAPFVAKTYRMVDDPATDGVIAWGRDSNSFVVADPFAFSQTLLPAHFKHSNFSSFVRQLNTYGFRKVDPDRWEFAHVSFLRGQTHLLRRIVRRSSGGGGAKRKEEAGGCGGGGEAAAGDVDEESAVVALEVARLRREQREIEGRVAAMWRRVQETERRPKQMLAFLVKVVGDPQVLRRLVDRDNTNAAASNADDSAVHHQVKRPRLLLDSSSTTTTHGDRHLVTAAADGFYAGGCGPEAAAAAAFVPDDAVDFTGLYTGGDGFGNAVVDAGVDYPPAYAFPVVDSGY.

Positions 105-128 are disordered; that stretch reads SSGGGGAKRKEEAGGCGGGGEAAA. The hydrophobic repeat HR-A/B stretch occupies residues 145-181; the sequence is LRREQREIEGRVAAMWRRVQETERRPKQMLAFLVKVV. The short motif at 213–216 is the Nuclear localization signal element; the sequence is KRPR.

This sequence belongs to the HSF family. Class C subfamily. In terms of assembly, homotrimer. Exhibits temperature-dependent phosphorylation.

It localises to the nucleus. Transcriptional regulator that specifically binds DNA of heat shock promoter elements (HSE). The polypeptide is Heat stress transcription factor C-2a (HSFC2A) (Oryza sativa subsp. japonica (Rice)).